A 462-amino-acid polypeptide reads, in one-letter code: MRVSLRSITSLLAAATAAVLAAPATETLDRRAALPNPYDDPFYTTPSNIGTFAKGQVIQSRKVPTDIGNANNAASFQLQYRTTNTQNEAVADVATVWIPAKPASPPKIFSYQVYEDATALDCAPSYSYLTGLDQPNKVTAVLDTPIIIGWALQQGYYVVSSDHEGFKAAFIAGYEEGMAILDGIRALKNYQNLPSDSKVALEGYSGGAHATVWATSLADSYAPELNIVGASHGGTPVSAKDTFTFLNGGPFAGFALAGVSGLSLAHPDMESFIEARLNAKGQQTLKQIRGRGFCLPQVVLTYPFLNVFSLVNDTNLLNEAPIAGILKQETVVQAEASYTVSVPKFPRFIWHAIPDEIVPYQPAATYVKEQCAKGANINFSPYPIAEHLTAEIFGLVPSLWFIKQAFDGTTPKVICGTPIPAIAGITTPSADQVLGSDLANQLRSLNGKQSAFGKPFGPITPP.

An N-terminal signal peptide occupies residues 1–21 (MRVSLRSITSLLAAATAAVLA). Cysteines 122 and 294 form a disulfide. Catalysis depends on charge relay system residues Ser205, Asp355, and His387. A disulfide bond links Cys371 and Cys415.

It belongs to the AB hydrolase superfamily. Lipase family. In terms of assembly, monomer.

It is found in the secreted. It carries out the reaction a triacylglycerol + H2O = a diacylglycerol + a fatty acid + H(+). Functionally, hydrolyzes triglycerides, with a preference for substrates with short-chain lengths (C4 to C8). Has the highest activity with tributyrin (C4), followed by tricaproin (C6) and tricaprylin (C8). Can also hydrolyze vinylacetate (C2) and triolein (C18), but with lower efficiency. Has no activity with tripalmitin (C16). The chain is Lipase A from Moesziomyces aphidis (Pseudozyma aphidis).